Here is a 108-residue protein sequence, read N- to C-terminus: Thioredoxin (108 aa).

Residues 2 to 108 (NKIIELTDQN…LKEFLDENIN (107 aa)) form the Thioredoxin domain. The cysteines at positions 32 and 35 are disulfide-linked.

It belongs to the thioredoxin family.

Functionally, participates in various redox reactions through the reversible oxidation of its active center dithiol to a disulfide and catalyzes dithiol-disulfide exchange reactions. The chain is Thioredoxin (trxA) from Buchnera aphidicola subsp. Acyrthosiphon pisum (strain APS) (Acyrthosiphon pisum symbiotic bacterium).